A 584-amino-acid chain; its full sequence is Methionine--tRNA ligase (584 aa).

The 'HIGH' region motif lies at 12 to 22; sequence PYANGDLHLGH. Cys-144, Cys-147, Cys-157, and Cys-160 together coordinate Zn(2+). A 'KMSKS' region motif is present at residues 334 to 338; the sequence is QFSTS. An ATP-binding site is contributed by Thr-337. A disordered region spans residues 541-563; sequence EGRDRWAPSELEAGRPLPPPQPL.

It belongs to the class-I aminoacyl-tRNA synthetase family. MetG type 1 subfamily. As to quaternary structure, monomer. Zn(2+) serves as cofactor.

Its subcellular location is the cytoplasm. It carries out the reaction tRNA(Met) + L-methionine + ATP = L-methionyl-tRNA(Met) + AMP + diphosphate. Is required not only for elongation of protein synthesis but also for the initiation of all mRNA translation through initiator tRNA(fMet) aminoacylation. The polypeptide is Methionine--tRNA ligase (Thermomicrobium roseum (strain ATCC 27502 / DSM 5159 / P-2)).